The sequence spans 255 residues: Capsid protein (255 aa).

The Bipartite nuclear localization signal signature appears at 1 to 25; sequence MVQKRKDLRRSDAGSAVRAKLHKAS.

It belongs to the geminiviridae capsid protein family. Homomultimer. Interacts with the movement protein. Binds to single-stranded and double-stranded viral DNA.

It localises to the virion. Its subcellular location is the host nucleus. Encapsidates the viral genome into characteristic twinned ('geminate') particles. Binds the genomic viral ssDNA and shuttles it into and out of the cell nucleus. Plays a role in protection of the genome from degradation, virus acquisition and transmission by insect vectors, infectivity, and systemic movement. The CP of monopartite geminiviruses is absolutely essential for virus movement. The chain is Capsid protein from Miscanthus streak virus (isolate 91) (MiSV).